Reading from the N-terminus, the 522-residue chain is Putative ribose/galactose/methyl galactoside import ATP-binding protein (522 aa).

ABC transporter domains lie at 7-244 (LEMV…VGRE) and 254-498 (PKLG…TGQA). Residue 39–46 (GENGAGKS) participates in ATP binding.

It belongs to the ABC transporter superfamily. Carbohydrate importer 2 (CUT2) (TC 3.A.1.2) family.

The protein localises to the cell membrane. The catalysed reaction is D-ribose(out) + ATP + H2O = D-ribose(in) + ADP + phosphate + H(+). It carries out the reaction D-galactose(out) + ATP + H2O = D-galactose(in) + ADP + phosphate + H(+). Functionally, part of an ABC transporter complex involved in carbohydrate import. Could be involved in ribose, galactose and/or methyl galactoside import. Responsible for energy coupling to the transport system. The polypeptide is Putative ribose/galactose/methyl galactoside import ATP-binding protein (Halalkalibacterium halodurans (strain ATCC BAA-125 / DSM 18197 / FERM 7344 / JCM 9153 / C-125) (Bacillus halodurans)).